The primary structure comprises 324 residues: Ig gamma-1 chain C region secreted form (324 aa).

The interval 1-97 (AKTTPPSVYP…ASSTKVDKKI (97 aa)) is CH1. A disulfide bridge links Cys-27 with Cys-82. The tract at residues 98 to 110 (VPRDCGCKPCICT) is hinge. The interval 111–217 (VPEVSSVFIF…PIEKTISKTK (107 aa)) is CH2. Disulfide bonds link Cys-138-Cys-198 and Cys-244-Cys-302. Asn-174 carries N-linked (GlcNAc...) asparagine glycosylation. A CH3 region spans residues 218 to 324 (GRPKAPQVYT…EKSLSHSPGK (107 aa)).

The protein localises to the secreted. This is Ig gamma-1 chain C region secreted form (Ighg1) from Mus musculus (Mouse).